Consider the following 341-residue polypeptide: Protein BEARSKIN2 (341 aa).

In terms of domain architecture, NAC spans 9-160 (VPPGFRFHPT…GWVVCRVFMK (152 aa)). Residues 109–166 (IGMRKTLVFYKGRAPHGQKTDWIMHEYRLEDADDPQANPSEDGWVVCRVFMKKNLFKV) mediate DNA binding.

In terms of tissue distribution, expressed throughout the root cap, in both columella (COL) and lateral root cap (LRC) cells, with higher levels in the COL-adjoining LRC than the upper LRC. Also present at low levels expression in the tips of cotyledons and the cotyledon vasculature, as weel as in vasculature of the first pair of true leaves and at the hydathodes.

It is found in the nucleus. Its function is as follows. Transcription activator. Together with BRN1 and SMB, regulates cellular maturation of root cap. Promotes the expression of genes involved in secondary cell walls (SCW) biosynthesis. This is Protein BEARSKIN2 (BRN2) from Arabidopsis thaliana (Mouse-ear cress).